A 427-amino-acid chain; its full sequence is Lupus La protein homolog B (427 aa).

An HTH La-type RNA-binding domain is found at 6-98 (DKEQLDLDTK…RRSPAKPLPE (93 aa)). Residues 110–202 (RSVYIKGFPT…EERKLNKSEE (93 aa)) enclose the RRM domain. Disordered regions lie at residues 193–220 (EERK…AEDA) and 319–427 (EGKQ…VGDQ). Residues 226-348 (EERVGCLLKF…KGRGGKGNDS (123 aa)) enclose the xRRM domain. Positions 315–331 (KKIMEGKQESFNKRKGR) match the Nuclear localization signal motif. Composition is skewed to basic residues over residues 327 to 342 (KRKG…KGRG) and 351 to 360 (RKKIQFQGKK). Positions 365-376 (SSDDEDDMEESE) are enriched in acidic residues. Basic and acidic residues predominate over residues 405–427 (RALDDKAEDGPAVKQSKTEVGDQ).

Phosphorylated.

It is found in the nucleus. Functionally, la protein plays a role in the transcription of RNA polymerase III. It is most probably a transcription termination factor. Binds to the 3' termini of virtually all nascent polymerase III transcripts. This is Lupus La protein homolog B (ssb-b) from Xenopus laevis (African clawed frog).